Reading from the N-terminus, the 1559-residue chain is Bile pigment transporter 1 (1559 aa).

Residues 1 to 29 lie on the Vacuolar side of the membrane; that stretch reads MSSLEVVDGCPYGYRPYPDSGTNALNPCF. Residues 30-50 traverse the membrane as a helical segment; sequence ISVISAWQAVFFLLIGSYQLW. At 51–84 the chain is on the cytoplasmic side; that stretch reads KLYKNNKVPPRFKNFPTLPSKINSRHLTHLTNVC. A helical membrane pass occupies residues 85–105; it reads FQSTLIICELALVSQSSDRVY. At 106–110 the chain is on the vacuolar side; sequence PFILK. A helical transmembrane segment spans residues 111–127; it reads KALYLNLLFNLGISLPT. The Cytoplasmic segment spans residues 128 to 139; the sequence is QYLAYFKSTFSM. Residues 140–160 form a helical membrane-spanning segment; that stretch reads GNQLFYYMFQILLQLFLILQR. The Vacuolar portion of the chain corresponds to 161–178; sequence YYHGSSNERLTVISGQTA. Residues 179-199 traverse the membrane as a helical segment; sequence MILEVLLLFNSVAIFIYDLCI. Topologically, residues 200-283 are cytoplasmic; it reads FEPINELSEY…WLNRNSLWRA (84 aa). Residues 284–304 traverse the membrane as a helical segment; that stretch reads IWKSFGRTISVAMLYETTSDL. The ABC transmembrane type-1 1 domain occupies 292 to 578; it reads ISVAMLYETT…VPSMINTIIE (287 aa). The Vacuolar segment spans residues 305–333; the sequence is LSVVQPQFLRIFIDGLNPETSSKYPPLNG. The helical transmembrane segment at 334 to 354 threads the bilayer; sequence VFIALTLFVISVVSVFLTNQF. Over 355 to 410 the chain is Cytoplasmic; it reads YIGIFEAGLGIRGSLASLVYQKSLRLTLAERNEKSTGDILNLMSVDVLRIQRFFEN. A helical transmembrane segment spans residues 411-431; sequence AQTIIGAPIQIIVVLTSLYWL. Residues 432 to 434 lie on the Vacuolar side of the membrane; that stretch reads LGK. The helical transmembrane segment at 435–455 threads the bilayer; sequence AVIGGLVTMAIMMPINAFLSR. Residues 456–518 lie on the Cytoplasmic side of the membrane; that stretch reads KVKKLSKTQM…NFRKIGIVSN (63 aa). Residues 519–539 form a helical membrane-spanning segment; that stretch reads LIYFAWNCVPLMVTCSTFGLF. Over 540–560 the chain is Vacuolar; the sequence is SLFSDSPLSPAIVFPSLSLFN. Residues 561 to 581 traverse the membrane as a helical segment; that stretch reads ILNSAIYSVPSMINTIIETSV. The Cytoplasmic portion of the chain corresponds to 582 to 972; that stretch reads SMERLKSFLL…VKTKIYLAYI (391 aa). Residues 639–871 form the ABC transporter 1 domain; it reads LRTDEESIIG…KNNTSKLKKL (233 aa). Ser645 carries the post-translational modification Phosphoserine. Residue 672–679 coordinates ATP; sequence GRVGAGKS. The segment at 877–899 is disordered; the sequence is SPIDNGNESDVQTEHRSESEVDE. Ser885 is subject to Phosphoserine. At Thr889 the chain carries Phosphothreonine. Phosphoserine occurs at positions 893 and 895. Thr916 is modified (phosphothreonine). 2 positions are modified to phosphoserine: Ser927 and Ser931. A Phosphothreonine modification is found at Thr934. The chain crosses the membrane as a helical span at residues 973–993; the sequence is KACGVLGVVLFFLFMILTRVF. The ABC transmembrane type-1 2 domain maps to 980-1265; the sequence is VVLFFLFMIL…IVRTTVTIET (286 aa). Residues 994–1030 lie on the Vacuolar side of the membrane; the sequence is DLAENFWLKYWSESNEKNGSNERVWMFVGVYSLIGVA. N-linked (GlcNAc...) asparagine glycosylation is present at Asn1011. The helical transmembrane segment at 1031–1052 threads the bilayer; that stretch reads SAAFNNLRSIMMLLYCSIRGSK. Topologically, residues 1053 to 1095 are cytoplasmic; the sequence is KLHESMAKSVIRSPMTFFETTPVGRIINRFSSDMDAVDSNLQY. The chain crosses the membrane as a helical span at residues 1096–1116; sequence IFSFFFKSILTYLVTVILVGY. Residue Asn1117 is a topological domain, vacuolar. Residues 1118-1138 form a helical membrane-spanning segment; it reads MPWFLVFNMFLVVIYIYYQTF. The Cytoplasmic segment spans residues 1139–1209; sequence YIVLSRELKR…STNRWLSVRL (71 aa). The helical transmembrane segment at 1210-1230 threads the bilayer; sequence QTIGATIVLATAILALATMNT. Residues 1231–1235 lie on the Vacuolar side of the membrane; that stretch reads KRQLS. A helical membrane pass occupies residues 1236–1256; the sequence is SGMVGLLMSYSLEVTGSLTWI. Over 1257 to 1559 the chain is Cytoplasmic; that stretch reads VRTTVTIETN…SLCEKGGYLK (303 aa). The ABC transporter 2 domain maps to 1302-1553; the sequence is IEFKNYSTKY…KTSIFYSLCE (252 aa). 1336–1343 serves as a coordination point for ATP; that stretch reads GRTGAGKS. Residues 1420–1433 are compositionally biased toward basic and acidic residues; the sequence is HLEKMLHSKPRGDD. The disordered stretch occupies residues 1420 to 1439; that stretch reads HLEKMLHSKPRGDDSNEEDG.

It belongs to the ABC transporter superfamily.

The protein localises to the vacuole membrane. Functionally, cooperates for the ATP-dependent vacuolar transport of bilirubin and glutathione conjugates. The protein is Bile pigment transporter 1 (BPT1) of Saccharomyces cerevisiae (strain ATCC 204508 / S288c) (Baker's yeast).